A 240-amino-acid chain; its full sequence is Putative RING finger protein ORF96 (240 aa).

The RING-type 1 zinc-finger motif lies at 9–44 (CVVCMEEKPLVVFEPCMHHNCCESCSGHVSNCPYCR). The segment at 150–202 (CVICKKEIKEEVGKTYMHACCTATICKPCAKAILKAMVEKEITENLPFCPYCF) adopts an RING-type 2; degenerate zinc-finger fold.

In Ostreid herpesvirus 1 (isolate France) (OsHV-1), this protein is Putative RING finger protein ORF96.